The following is a 706-amino-acid chain: MEKTFNLTRRDDGIAILTMDVPGETMNTLKAQFGPEISEILAEIKSDPHIRGLVLISGKKDSFVAGADISMLDACKTAGDAKALSQQGHVVFNELEALKIPVVAAIHGACLGGGLELALACHQRVCSDDGKTMLGVPEVQLGLLPGGGGTQRLPRLVGITTALDMMLTGKQIRSKQALKMGLVNDVVPQTILLQTAVEMALTGKRAPKPVKKSLVNQVLEGTSFGRNIIFDQATKQVEKKTQGNYPAPAKIIDCVRQGIAKGMQKGLEVEASHFAELVVSKESEALRSIFFATTEMKKETGAEGATPRKVKKAVILGGGLMGGGIASVTTTKAKIPVRVKDISEKGLSNALAYAYKLLDKGVKRRHMTPAARDNLMALMTTTTEYKGVKDADIIVEAVFEDLALKHQMVKDIERECGEHTIFASNTSSLPISQIAEAATRPENVIGLHYFSPVEKMPLVEVIAHAKTSPETIATTVAFARKQGKTPIVVQDGAGFYVNRILALYMNEAAQLLLEGQSVEHLDKALVKFGFPVGPITLLDEVGIDVGAKISPILEKELGERFKAPAAFDKLLGDDRKGRKNGKGFYQYGASSKKTKAVDETVYGVLGIKPGTNKDAKALAERCVVQMLNEAVRCLDDGIIASPRDGDIGAIFGIGFPPFLGGPFHYIDTLGAANLVKILESYQSQFGNRFEPCERLKTMARENVSFF.

The tract at residues 1–188 (MEKTFNLTRR…KMGLVNDVVP (188 aa)) is enoyl-CoA hydratase. The tract at residues 308–706 (RKVKKAVILG…TMARENVSFF (399 aa)) is 3-hydroxyacyl-CoA dehydrogenase.

The protein in the N-terminal section; belongs to the enoyl-CoA hydratase/isomerase family. In the central section; belongs to the 3-hydroxyacyl-CoA dehydrogenase family. In terms of assembly, heterotetramer of two alpha chains (FadJ) and two beta chains (FadI).

It localises to the cytoplasm. The enzyme catalyses a (3S)-3-hydroxyacyl-CoA = a (2E)-enoyl-CoA + H2O. The catalysed reaction is a 4-saturated-(3S)-3-hydroxyacyl-CoA = a (3E)-enoyl-CoA + H2O. It catalyses the reaction a (3S)-3-hydroxyacyl-CoA + NAD(+) = a 3-oxoacyl-CoA + NADH + H(+). It carries out the reaction (3S)-3-hydroxybutanoyl-CoA = (3R)-3-hydroxybutanoyl-CoA. It functions in the pathway lipid metabolism; fatty acid beta-oxidation. In terms of biological role, catalyzes the formation of a hydroxyacyl-CoA by addition of water on enoyl-CoA. Also exhibits 3-hydroxyacyl-CoA epimerase and 3-hydroxyacyl-CoA dehydrogenase activities. The chain is Fatty acid oxidation complex subunit alpha from Shewanella sp. (strain W3-18-1).